The following is a 417-amino-acid chain: Divinyl chlorophyllide a 8-vinyl-reductase, chloroplastic (417 aa).

Residues 1-49 (MSLCSSFNVFASYSPKPKTIFKDSKFISQFQVKSSPLASTFHTNESSTS) constitute a chloroplast transit peptide.

In terms of tissue distribution, highly expressed in leaves, stems and flower buds. Detected in roots.

The protein localises to the plastid. It localises to the chloroplast. The catalysed reaction is protochlorophyllide a + NADP(+) = 3,8-divinyl protochlorophyllide a + NADPH + H(+). The protein operates within porphyrin-containing compound metabolism; chlorophyll biosynthesis. Functionally, catalyzes the conversion of divinyl chlorophyllide to monovinyl chlorophyllide. Reduces the 8-vinyl group of the tetrapyrrole to an ethyl group using NADPH as the reductant. The best substrate is (3,8-divinyl)-chlorophyllide a (DV-Chlidea). Very low activity with (3,8-divinyl)-protochlorophyllide a (DV-Pchlidea) and (3,8-divinyl)-magnesium-protoporphyrin IX monomethyl ester (DV-MPE). No activity with (3,8-divinyl)-chlorophyllide b (DV-Chlideb), (3,8-divinyl)-magnesium-protoporphyrin IX (DV-Mg-Proto) and either (3,8-divinyl)-chlorophyll a (DV-Chla) or b (DV-Chlb). The chain is Divinyl chlorophyllide a 8-vinyl-reductase, chloroplastic (DVR) from Arabidopsis thaliana (Mouse-ear cress).